The primary structure comprises 610 residues: Anthocyanin regulatory Lc protein (610 aa).

Disordered regions lie at residues 402–422 (ATGAAQEMSGTGTKNHVMSER) and 468–524 (LESS…PVLT). Residues 412-461 (TGTKNHVMSERKRREKLNEMFLVLKSLLPSIHRVNKASILAETIAYLKEL) form the bHLH domain. The segment covering 481–495 (TTTRLITRPSRGNNE) has biased composition (polar residues). Over residues 508–519 (KSPELGRDDVER) the composition is skewed to basic and acidic residues.

The protein belongs to the bHLH protein family. Efficient DNA binding requires dimerization with another bHLH protein.

It is found in the nucleus. In terms of biological role, putative transcriptional activator. Controls tissue-specific synthesis of anthocyanin pigments in various parts of the maize plant. This is Anthocyanin regulatory Lc protein (LC) from Zea mays (Maize).